Consider the following 635-residue polypeptide: Threonine--tRNA ligase (635 aa).

The region spanning 1–61 (MIVITLPDGS…EGDARLAIVT (61 aa)) is the TGS domain. A catalytic region spans residues 242–533 (DHRKLGRELD…LIEQHAGALP (292 aa)). Cys333, His384, and His510 together coordinate Zn(2+).

Belongs to the class-II aminoacyl-tRNA synthetase family. Homodimer. The cofactor is Zn(2+).

The protein localises to the cytoplasm. It catalyses the reaction tRNA(Thr) + L-threonine + ATP = L-threonyl-tRNA(Thr) + AMP + diphosphate + H(+). Functionally, catalyzes the attachment of threonine to tRNA(Thr) in a two-step reaction: L-threonine is first activated by ATP to form Thr-AMP and then transferred to the acceptor end of tRNA(Thr). Also edits incorrectly charged L-seryl-tRNA(Thr). The sequence is that of Threonine--tRNA ligase from Methylibium petroleiphilum (strain ATCC BAA-1232 / LMG 22953 / PM1).